The primary structure comprises 283 residues: Elongation factor Ts (283 aa).

Residues 80-83 (TDFV) are involved in Mg(2+) ion dislocation from EF-Tu.

This sequence belongs to the EF-Ts family.

It localises to the cytoplasm. Associates with the EF-Tu.GDP complex and induces the exchange of GDP to GTP. It remains bound to the aminoacyl-tRNA.EF-Tu.GTP complex up to the GTP hydrolysis stage on the ribosome. The polypeptide is Elongation factor Ts (Salmonella agona (strain SL483)).